The chain runs to 461 residues: Alcaligin biosynthesis enzyme (461 aa).

9-15 provides a ligand contact to FAD; that stretch reads VAIGIGP.

The protein belongs to the lysine N(6)-hydroxylase/L-ornithine N(5)-oxygenase family. The cofactor is FAD.

It participates in siderophore biosynthesis; alcaligin biosynthesis. The protein is Alcaligin biosynthesis enzyme (alcA) of Bordetella parapertussis (strain 12822 / ATCC BAA-587 / NCTC 13253).